Here is a 303-residue protein sequence, read N- to C-terminus: Quinolinate synthase (303 aa).

His-24 and Ser-41 together coordinate iminosuccinate. Cys-86 contacts [4Fe-4S] cluster. Residues 112-114 (YIN) and Ser-129 each bind iminosuccinate. Residue Cys-172 coordinates [4Fe-4S] cluster. Residues 198–200 (HPE) and Thr-215 contribute to the iminosuccinate site. Cys-260 provides a ligand contact to [4Fe-4S] cluster.

The protein belongs to the quinolinate synthase family. Type 2 subfamily. The cofactor is [4Fe-4S] cluster.

The protein localises to the cytoplasm. The catalysed reaction is iminosuccinate + dihydroxyacetone phosphate = quinolinate + phosphate + 2 H2O + H(+). Its pathway is cofactor biosynthesis; NAD(+) biosynthesis; quinolinate from iminoaspartate: step 1/1. In terms of biological role, catalyzes the condensation of iminoaspartate with dihydroxyacetone phosphate to form quinolinate. This Caldicellulosiruptor bescii (strain ATCC BAA-1888 / DSM 6725 / KCTC 15123 / Z-1320) (Anaerocellum thermophilum) protein is Quinolinate synthase.